We begin with the raw amino-acid sequence, 172 residues long: Melanocortin-2 receptor accessory protein (172 aa).

Residues 38–58 (IVIAFWVSLAAFVVLLFLILL) traverse the membrane as a helical segment. 2 disordered regions span residues 105-130 (QAQASSVEPGSRTGPDQPLRQESSST) and 152-172 (PLVRSKPSEPPPGDRTSQLQS).

It belongs to the MRAP family. In terms of assembly, homodimer and heterodimer. Forms antiparallel homodimers and heterodimers with MRAP2. Interacts with MC1R, MC2R, MC3R, MC4R and MC5R.

Its subcellular location is the cell membrane. The protein localises to the endoplasmic reticulum membrane. In terms of biological role, modulator of melanocortin receptors (MC1R, MC2R, MC3R, MC4R and MC5R). Acts by increasing ligand-sensitivity of melanocortin receptors and enhancing generation of cAMP by the receptors. Required both for MC2R trafficking to the cell surface of adrenal cells and for signaling in response to corticotropin (ACTH). May be involved in the intracellular trafficking pathways in adipocyte cells. The protein is Melanocortin-2 receptor accessory protein (MRAP) of Pan troglodytes (Chimpanzee).